Here is a 129-residue protein sequence, read N- to C-terminus: Flagellar assembly factor FliW 2 (129 aa).

This sequence belongs to the FliW family. As to quaternary structure, interacts with translational regulator CsrA and flagellin(s).

The protein localises to the cytoplasm. Its function is as follows. Acts as an anti-CsrA protein, binds CsrA and prevents it from repressing translation of its target genes, one of which is flagellin. Binds to flagellin and participates in the assembly of the flagellum. The polypeptide is Flagellar assembly factor FliW 2 (Helicobacter pylori (strain J99 / ATCC 700824) (Campylobacter pylori J99)).